Here is a 199-residue protein sequence, read N- to C-terminus: Inosine triphosphate pyrophosphatase (199 aa).

12-17 (TGNAKK) contributes to the ITP binding site. Glu-42 contacts Mg(2+). ITP contacts are provided by residues Lys-54, 70 to 71 (DT), Lys-87, 146 to 149 (FGWD), Lys-169, and 174 to 175 (HR).

It belongs to the HAM1 NTPase family. In terms of assembly, homodimer. It depends on Mg(2+) as a cofactor. Mn(2+) is required as a cofactor.

The protein resides in the cytoplasm. It carries out the reaction ITP + H2O = IMP + diphosphate + H(+). The enzyme catalyses dITP + H2O = dIMP + diphosphate + H(+). The catalysed reaction is XTP + H2O = XMP + diphosphate + H(+). Its function is as follows. Pyrophosphatase that hydrolyzes non-canonical purine nucleotides such as inosine triphosphate (ITP), deoxyinosine triphosphate (dITP) or xanthosine 5'-triphosphate (XTP) to their respective monophosphate derivatives. The enzyme does not distinguish between the deoxy- and ribose forms. Probably excludes non-canonical purines from RNA and DNA precursor pools, thus preventing their incorporation into RNA and DNA and avoiding chromosomal lesions. The chain is Inosine triphosphate pyrophosphatase from Monosiga brevicollis (Choanoflagellate).